The sequence spans 794 residues: Zinc finger protein 148 (794 aa).

K6 is covalently cross-linked (Glycyl lysine isopeptide (Lys-Gly) (interchain with G-Cter in SUMO2)). Position 51 is a phosphoserine (S51). Residues K88, K115, and K132 each participate in a glycyl lysine isopeptide (Lys-Gly) (interchain with G-Cter in SUMO2) cross-link. Residues 171-193 form a C2H2-type 1 zinc finger; it reads HVCEHCNAAFRTNYHLQRHVFIH. At T194 the chain carries Phosphothreonine. C2H2-type zinc fingers lie at residues 199–221 and 227–249; these read FQCSQCDMRFIQKYLLQRHEKIH and FRCDECGMRFIQKYHMERHKRTH. Position 250 is a phosphoserine (S250). The segment at 255-278 adopts a C2H2-type 4 zinc-finger fold; that stretch reads YQCEYCLQYFSRTDRVLKHKRMCH. K291 is covalently cross-linked (Glycyl lysine isopeptide (Lys-Gly) (interchain with G-Cter in SUMO2)). The disordered stretch occupies residues 298–346; it reads EEDSGFSTSPKDNSLPKKKRQKPEKKSSGMDKESVLDKSDTKKDRNDYL. Phosphoserine is present on residues S301 and S306. A Glycyl lysine isopeptide (Lys-Gly) (interchain with G-Cter in SUMO2) cross-link involves residue K308. Over residues 321 to 344 the composition is skewed to basic and acidic residues; the sequence is EKKSSGMDKESVLDKSDTKKDRND. Residue K356 forms a Glycyl lysine isopeptide (Lys-Gly) (interchain with G-Cter in SUMO1); alternate linkage. K356 is covalently cross-linked (Glycyl lysine isopeptide (Lys-Gly) (interchain with G-Cter in SUMO2); alternate). A Glycyl lysine isopeptide (Lys-Gly) (interchain with G-Cter in SUMO2) cross-link involves residue K402. S412 is modified (phosphoserine). Glycyl lysine isopeptide (Lys-Gly) (interchain with G-Cter in SUMO2) cross-links involve residues K421 and K424. The span at 574 to 588 shows a compositional bias: polar residues; sequence NSSDVPEVTQSENVG. The disordered stretch occupies residues 574-596; sequence NSSDVPEVTQSENVGSSSQASSS. K607 is modified (N6-acetyllysine). A phosphoserine mark is found at S665 and S784.

This sequence belongs to the krueppel C2H2-type zinc-finger protein family. Interacts with HNRNPDL. Interacts with the 5FMC complex; the interaction requires association with CHTOP. Interacts with CAVIN1. In terms of processing, sumoylated with SUMO2. Desumoylated by SENP3, resulting in the stimulation of transcription of its target genes. Expressed in heart, lung, kidney, skeletal muscle, liver, brain and spleen.

It is found in the nucleus. Functionally, involved in transcriptional regulation. Represses the transcription of a number of genes including gastrin, stromelysin and enolase. Binds to the G-rich box in the enhancer region of these genes. This Rattus norvegicus (Rat) protein is Zinc finger protein 148 (Znf148).